The primary structure comprises 556 residues: 5-aminolevulinate synthase, mitochondrial (556 aa).

The N-terminal 46 residues, 1-46 (MDSLARQSAKICPFVSRVTSSMQQVQVLHKTNMSAMAQQCPVMRRA), are a transit peptide targeting the mitochondrion. 3 residues coordinate substrate: Arg-105, Ser-218, and Lys-237. Ser-270, His-298, and Thr-342 together coordinate pyridoxal 5'-phosphate. The active site involves Lys-345. Lys-345 carries the N6-(pyridoxal phosphate)lysine modification. The pyridoxal 5'-phosphate site is built by Thr-374 and Ser-375. A substrate-binding site is contributed by Thr-460.

The protein belongs to the class-II pyridoxal-phosphate-dependent aminotransferase family. As to quaternary structure, homodimer. The cofactor is pyridoxal 5'-phosphate.

Its subcellular location is the mitochondrion matrix. The enzyme catalyses succinyl-CoA + glycine + H(+) = 5-aminolevulinate + CO2 + CoA. The protein operates within porphyrin-containing compound metabolism; protoporphyrin-IX biosynthesis; 5-aminolevulinate from glycine: step 1/1. Functionally, catalyzes the synthesis of 5-aminolevulinate (ALA) from succinyl-CoA and glycine, the first and rate-limiting step in heme biosynthesis. The sequence is that of 5-aminolevulinate synthase, mitochondrial (HEM1) from Eremothecium gossypii (strain ATCC 10895 / CBS 109.51 / FGSC 9923 / NRRL Y-1056) (Yeast).